A 360-amino-acid chain; its full sequence is Phospho-N-acetylmuramoyl-pentapeptide-transferase (360 aa).

10 helical membrane-spanning segments follow: residues 21-41, 73-93, 98-118, 132-152, 168-188, 199-219, 236-256, 263-283, 288-308, and 338-358; these read YITF…LWIG, TMGG…WADL, VWFV…DDYW, WKYF…YAIG, VMPQ…VGTS, GLAI…AWAT, SGEL…FLWF, VFMG…IAVL, LLLV…ILQV, and VIVR…VTLK.

This sequence belongs to the glycosyltransferase 4 family. MraY subfamily. It depends on Mg(2+) as a cofactor.

It localises to the cell inner membrane. It catalyses the reaction UDP-N-acetyl-alpha-D-muramoyl-L-alanyl-gamma-D-glutamyl-meso-2,6-diaminopimeloyl-D-alanyl-D-alanine + di-trans,octa-cis-undecaprenyl phosphate = di-trans,octa-cis-undecaprenyl diphospho-N-acetyl-alpha-D-muramoyl-L-alanyl-D-glutamyl-meso-2,6-diaminopimeloyl-D-alanyl-D-alanine + UMP. Its pathway is cell wall biogenesis; peptidoglycan biosynthesis. Catalyzes the initial step of the lipid cycle reactions in the biosynthesis of the cell wall peptidoglycan: transfers peptidoglycan precursor phospho-MurNAc-pentapeptide from UDP-MurNAc-pentapeptide onto the lipid carrier undecaprenyl phosphate, yielding undecaprenyl-pyrophosphoryl-MurNAc-pentapeptide, known as lipid I. The polypeptide is Phospho-N-acetylmuramoyl-pentapeptide-transferase (Glaesserella parasuis serovar 5 (strain SH0165) (Haemophilus parasuis)).